The following is a 97-amino-acid chain: Aspartyl/glutamyl-tRNA(Asn/Gln) amidotransferase subunit C (97 aa).

The protein belongs to the GatC family. Heterotrimer of A, B and C subunits.

The catalysed reaction is L-glutamyl-tRNA(Gln) + L-glutamine + ATP + H2O = L-glutaminyl-tRNA(Gln) + L-glutamate + ADP + phosphate + H(+). It carries out the reaction L-aspartyl-tRNA(Asn) + L-glutamine + ATP + H2O = L-asparaginyl-tRNA(Asn) + L-glutamate + ADP + phosphate + 2 H(+). In terms of biological role, allows the formation of correctly charged Asn-tRNA(Asn) or Gln-tRNA(Gln) through the transamidation of misacylated Asp-tRNA(Asn) or Glu-tRNA(Gln) in organisms which lack either or both of asparaginyl-tRNA or glutaminyl-tRNA synthetases. The reaction takes place in the presence of glutamine and ATP through an activated phospho-Asp-tRNA(Asn) or phospho-Glu-tRNA(Gln). In Thermosynechococcus vestitus (strain NIES-2133 / IAM M-273 / BP-1), this protein is Aspartyl/glutamyl-tRNA(Asn/Gln) amidotransferase subunit C.